We begin with the raw amino-acid sequence, 386 residues long: Lipoyl synthase, mitochondrial (386 aa).

[4Fe-4S] cluster is bound by residues Cys-110, Cys-115, Cys-121, Cys-141, Cys-145, Cys-148, and Ser-356. The region spanning 124-345 is the Radical SAM core domain; it reads GNDKSKATAT…KEQALEMGFL (222 aa).

It belongs to the radical SAM superfamily. Lipoyl synthase family. It depends on [4Fe-4S] cluster as a cofactor.

The protein resides in the mitochondrion. The enzyme catalyses [[Fe-S] cluster scaffold protein carrying a second [4Fe-4S](2+) cluster] + N(6)-octanoyl-L-lysyl-[protein] + 2 oxidized [2Fe-2S]-[ferredoxin] + 2 S-adenosyl-L-methionine + 4 H(+) = [[Fe-S] cluster scaffold protein] + N(6)-[(R)-dihydrolipoyl]-L-lysyl-[protein] + 4 Fe(3+) + 2 hydrogen sulfide + 2 5'-deoxyadenosine + 2 L-methionine + 2 reduced [2Fe-2S]-[ferredoxin]. The protein operates within protein modification; protein lipoylation via endogenous pathway; protein N(6)-(lipoyl)lysine from octanoyl-[acyl-carrier-protein]: step 2/2. Functionally, catalyzes the radical-mediated insertion of two sulfur atoms into the C-6 and C-8 positions of the octanoyl moiety bound to the lipoyl domains of lipoate-dependent enzymes, thereby converting the octanoylated domains into lipoylated derivatives. This is Lipoyl synthase, mitochondrial from Zygosaccharomyces rouxii (strain ATCC 2623 / CBS 732 / NBRC 1130 / NCYC 568 / NRRL Y-229).